The sequence spans 535 residues: Sucrose transport protein SUT5 (535 aa).

Over 1-53 the chain is Cytoplasmic; it reads MEEGRRGDREGKSAAGWTALSTTKTTLEEKRRLQANGSVGGDAGTSGFRRIVR. A helical transmembrane segment spans residues 54–74; sequence LFFACMVAGGIQYGWALQLSL. Over 75–87 the chain is Extracellular; the sequence is LSPYSQTLGISHS. A helical membrane pass occupies residues 88–108; that stretch reads YVSLTWICGPIAGFVVQPIVG. Over 109–122 the chain is Cytoplasmic; the sequence is YYSDRCTMKMGRRR. A helical membrane pass occupies residues 123–143; that stretch reads PFILVGCLIICISVMIIGFSA. Residues 144 to 163 lie on the Extracellular side of the membrane; sequence DIGRHLGDTKEHCSTYTGPR. A helical membrane pass occupies residues 164 to 184; the sequence is WSAAMVYIVGFWFLDFANNTV. Residues 185–203 lie on the Cytoplasmic side of the membrane; the sequence is QGPARAMMADLSAGHHGPN. The chain crosses the membrane as a helical span at residues 204–224; it reads VGQSIFSLWMAIGSVLGYLSG. The Extracellular segment spans residues 225–249; sequence ANGKWHEWFPWLKTAACCDACANLK. The chain crosses the membrane as a helical span at residues 250–270; sequence GAFFTAVLLIVVSMTVTMYLA. The Cytoplasmic portion of the chain corresponds to 271–302; sequence DEMPLDKQDVDTSGGGGCAVFVDLFKSLRNLP. Residues 303–323 traverse the membrane as a helical segment; it reads PAMFKVLAVTAVTWLSWFPFI. Residues 324–354 are Extracellular-facing; that stretch reads QYNTDWMGREIYHGEPQGTAAKADVYDAGVR. Residues 355–375 traverse the membrane as a helical segment; that stretch reads EGAMGLLFCSVALGVTSFVIP. Over 376-384 the chain is Cytoplasmic; it reads KLCRRLTSK. Residues 385–405 form a helical membrane-spanning segment; it reads VVWSISNFLVFALMAVMVAVG. The Extracellular portion of the chain corresponds to 406–429; the sequence is MVSMRGYRPSLAAGLTGPDPTLKA. The chain crosses the membrane as a helical span at residues 430–450; it reads VALVVFALIGIPQAVLFSVPW. The Cytoplasmic segment spans residues 451–465; that stretch reads AVASEVTAEEGGGQG. A helical transmembrane segment spans residues 466 to 486; the sequence is LAIGVLNIAIVVPQLVIALTA. Residues 487–498 lie on the Extracellular side of the membrane; that stretch reads GPIDGAFNKGNT. Residues 499–519 form a helical membrane-spanning segment; sequence PAFGIGGAFAFICGVLALIWL. Residues 520–535 lie on the Cytoplasmic side of the membrane; it reads PKTRGVSNAAVVAGGH.

This sequence belongs to the glycoside-pentoside-hexuronide (GPH) cation symporter transporter (TC 2.A.2.4) family. As to quaternary structure, homodimer. In terms of tissue distribution, widely expressed. Highest expression in sink leaves and lowest in germinating seeds.

The protein resides in the cell membrane. It participates in glycan biosynthesis; sucrose metabolism. Functionally, responsible for the transport of sucrose into the cell, with the concomitant uptake of protons (symport system). Can also transport other glucosides such as maltose, arbutin, salicin, helicin, alpha-phenylglucoside and beta-phenylglucoside. The sequence is that of Sucrose transport protein SUT5 (SUT5) from Oryza sativa subsp. japonica (Rice).